We begin with the raw amino-acid sequence, 754 residues long: Lysophospholipase 3 (754 aa).

An N-terminal signal peptide occupies residues 1 to 19 (MKVNLKLIIGSILISQAQA). Composition is skewed to low complexity over residues 25 to 40 (SSGSSSSSDSSPSETG) and 50 to 88 (LFGSGSSLTQSSSAQASSTKSTSDSASSTDSSLFSSSNS). Residues 25–88 (SSGSSSSSDS…DSSLFSSSNS (64 aa)) are disordered. 16 N-linked (GlcNAc...) asparagine glycosylation sites follow: Asn-112, Asn-156, Asn-174, Asn-317, Asn-325, Asn-354, Asn-391, Asn-423, Asn-470, Asn-510, Asn-515, Asn-560, Asn-577, Asn-597, Asn-625, and Asn-631. In terms of domain architecture, PLA2c spans 114–670 (TCPSKKTFIR…QEYCWTGGFK (557 aa)). Residues 687–721 (KTHTSGGTSSTTQQTSTTTGSSANGGSSSTGSSSS) show a composition bias toward low complexity. The tract at residues 687–727 (KTHTSGGTSSTTQQTSTTTGSSANGGSSSTGSSSSSKKKNG) is disordered.

This sequence belongs to the lysophospholipase family.

The protein resides in the secreted. The enzyme catalyses a 1-acyl-sn-glycero-3-phosphocholine + H2O = sn-glycerol 3-phosphocholine + a fatty acid + H(+). In terms of biological role, catalyzes the release of fatty acids from lysophospholipids. Phospholipase B may well contribute to pathogenicity by abetting the fungus in damaging and traversing host cell membranes, processes which likely increase the rapidity of disseminated infection. The sequence is that of Lysophospholipase 3 (PLB3) from Candida albicans (Yeast).